A 238-amino-acid chain; its full sequence is Dolichyldiphosphatase 1 (238 aa).

The next 4 membrane-spanning stretches (helical) occupy residues L33–F53, P100–L120, F130–V150, and W162–F182.

The protein belongs to the dolichyldiphosphatase family.

The protein localises to the endoplasmic reticulum membrane. It catalyses the reaction a di-trans,poly-cis-dolichyl diphosphate + H2O = a di-trans,poly-cis-dolichyl phosphate + phosphate + H(+). It functions in the pathway protein modification; protein glycosylation. Functionally, required for efficient N-glycosylation. Necessary for maintaining optimal levels of dolichol-linked oligosaccharides. Hydrolyzes dolichyl pyrophosphate at a very high rate and dolichyl monophosphate at a much lower rate. Does not act on phosphatidate. In Rhinolophus ferrumequinum (Greater horseshoe bat), this protein is Dolichyldiphosphatase 1 (DOLPP1).